The primary structure comprises 560 residues: Membrane protein insertase YidC (560 aa).

A helical membrane pass occupies residues 1–21 (MDIKRTILIAALAIVSYVMVL). The segment at 42 to 66 (VAPGLPDGVPAANNGASADVPSANA) is disordered. The next 5 helical transmembrane spans lie at 341–361 (LELTVDYGFLWFIAQPIFWLL), 367–387 (LLGNWGWSIIVLTMLIKGLFF), 437–457 (LGGCLPILVQMPVFLALYWVL), 468–488 (WMLWITDLSIKDPFFILPIIM), and 515–535 (PIIFTFFFLWFPAGLVLYWVV).

Belongs to the OXA1/ALB3/YidC family. Type 1 subfamily. In terms of assembly, interacts with the Sec translocase complex via SecD. Specifically interacts with transmembrane segments of nascent integral membrane proteins during membrane integration.

Its subcellular location is the cell inner membrane. Functionally, required for the insertion and/or proper folding and/or complex formation of integral membrane proteins into the membrane. Involved in integration of membrane proteins that insert both dependently and independently of the Sec translocase complex, as well as at least some lipoproteins. Aids folding of multispanning membrane proteins. The sequence is that of Membrane protein insertase YidC from Pseudomonas putida (strain W619).